The sequence spans 279 residues: Thymidylate synthase (279 aa).

133–134 (RR) contacts dUMP. Cys154 acts as the Nucleophile in catalysis. DUMP is bound by residues 178–181 (RSND), Asn189, and 219–221 (HIY). Asp181 is a binding site for (6R)-5,10-methylene-5,6,7,8-tetrahydrofolate. Residue Ala278 participates in (6R)-5,10-methylene-5,6,7,8-tetrahydrofolate binding.

It belongs to the thymidylate synthase family. Bacterial-type ThyA subfamily. In terms of assembly, homodimer.

The protein resides in the cytoplasm. It carries out the reaction dUMP + (6R)-5,10-methylene-5,6,7,8-tetrahydrofolate = 7,8-dihydrofolate + dTMP. It functions in the pathway pyrimidine metabolism; dTTP biosynthesis. Its function is as follows. Catalyzes the reductive methylation of 2'-deoxyuridine-5'-monophosphate (dUMP) to 2'-deoxythymidine-5'-monophosphate (dTMP) while utilizing 5,10-methylenetetrahydrofolate (mTHF) as the methyl donor and reductant in the reaction, yielding dihydrofolate (DHF) as a by-product. This enzymatic reaction provides an intracellular de novo source of dTMP, an essential precursor for DNA biosynthesis. The chain is Thymidylate synthase from Streptococcus suis (strain 05ZYH33).